The sequence spans 1781 residues: Chitin synthase 7 (1781 aa).

Asparagine 133, asparagine 534, asparagine 629, asparagine 644, asparagine 655, and asparagine 660 each carry an N-linked (GlcNAc...) asparagine glycan. A run of 2 helical transmembrane segments spans residues 741-761 (AWVAFVWALTFWIPSPLLKFV) and 777-797 (LVLFFIILLLNGLIIFWIIGF). N-linked (GlcNAc...) asparagine glycosylation is found at asparagine 889 and asparagine 1011. The helical transmembrane segment at 1048–1068 (LLLAFAIIICIVTAVKFLAAL) threads the bilayer. N-linked (GlcNAc...) asparagine glycosylation occurs at asparagine 1413. 3 helical membrane-spanning segments follow: residues 1444-1464 (LTGTIILPSTTVYIGYLIYVL), 1471-1491 (IPYISLAMIGAVYGHQALIFI), and 1499-1519 (IGWMIIYILAFPIYSFILPLY). Asparagine 1526 carries N-linked (GlcNAc...) asparagine glycosylation. A disordered region spans residues 1677 to 1712 (QANLSPAAGGGHSRSGTALGFSSGSRSPMPDAMRSQ). Polar residues predominate over residues 1690–1702 (RSGTALGFSSGSR). The DEK-C domain occupies 1723–1779 (GPTDMAIVESIRSVLCEVDLDTVTKKQVRALVEQRLQTELVGERRTFMDRQIDHELE).

It belongs to the chitin synthase family. Class V subfamily.

It localises to the cell membrane. It catalyses the reaction [(1-&gt;4)-N-acetyl-beta-D-glucosaminyl](n) + UDP-N-acetyl-alpha-D-glucosamine = [(1-&gt;4)-N-acetyl-beta-D-glucosaminyl](n+1) + UDP + H(+). In terms of biological role, polymerizes chitin, a structural polymer of the cell wall and septum, by transferring the sugar moiety of UDP-GlcNAc to the non-reducing end of the growing chitin polymer. Shows additive effects in septum formation with CHS1, CHS2, CHS3A, CHS4, CHS5 and CHS6. Indispensable for perithecia formation and regulates conidiation. Plays an important role in the response to cell wall stress. Also required for hyphal growth and pathogenicity. The sequence is that of Chitin synthase 7 from Gibberella zeae (strain ATCC MYA-4620 / CBS 123657 / FGSC 9075 / NRRL 31084 / PH-1) (Wheat head blight fungus).